Consider the following 912-residue polypeptide: Protein translocase subunit SecA (912 aa).

Residues Gln-87, 105–109 (GEGKT), and Asp-499 each bind ATP. The Zn(2+) site is built by Cys-897, Cys-899, Cys-908, and His-909.

The protein belongs to the SecA family. Monomer and homodimer. Part of the essential Sec protein translocation apparatus which comprises SecA, SecYEG and auxiliary proteins SecDF-YajC and YidC. The cofactor is Zn(2+).

It localises to the cell inner membrane. The protein localises to the cytoplasm. The catalysed reaction is ATP + H2O + cellular proteinSide 1 = ADP + phosphate + cellular proteinSide 2.. In terms of biological role, part of the Sec protein translocase complex. Interacts with the SecYEG preprotein conducting channel. Has a central role in coupling the hydrolysis of ATP to the transfer of proteins into and across the cell membrane, serving both as a receptor for the preprotein-SecB complex and as an ATP-driven molecular motor driving the stepwise translocation of polypeptide chains across the membrane. This is Protein translocase subunit SecA from Rhizorhabdus wittichii (strain DSM 6014 / CCUG 31198 / JCM 15750 / NBRC 105917 / EY 4224 / RW1) (Sphingomonas wittichii).